Consider the following 987-residue polypeptide: Pro-apoptotic serine protease NMA111 (987 aa).

A disordered region spans residues 1-29 (MPDIPTKRRLSNGSVIDNTNKRQMQSSFV). Residues 11–28 (SNGSVIDNTNKRQMQSSF) show a composition bias toward polar residues. Residues 69-262 (VKSVVSIQFT…LPVYRPLRAL (194 aa)) form a serine protease region. Active-site charge relay system residues include H110, D141, and S224. 2 consecutive PDZ domains span residues 279-364 (EWSL…VVIQ) and 878-950 (PHHG…VSFD).

This sequence belongs to the peptidase S1C family.

It is found in the nucleus. Its function is as follows. Nuclear serine protease which mediates apoptosis. The sequence is that of Pro-apoptotic serine protease NMA111 (NMA111) from Debaryomyces hansenii (strain ATCC 36239 / CBS 767 / BCRC 21394 / JCM 1990 / NBRC 0083 / IGC 2968) (Yeast).